The primary structure comprises 784 residues: Toll-like receptor 2 (784 aa).

An N-terminal signal peptide occupies residues 1 to 20 (MPRALWPAWVWAIIILSMEG). Over 21–587 (ASDKASSLSC…ARLSLSECHR (567 aa)) the chain is Extracellular. The cysteines at positions 30 and 36 are disulfide-linked. LRR repeat units follow at residues 54-77 (VKSL…RCVN), 78-101 (LKTL…HLRN), 102-125 (LEYL…SLYV), 126-150 (LKFL…HLPD), 151-175 (LRTL…GLTF), 176-199 (LEEL…SIQN), 200-223 (ISHL…IVSS), 224-250 (LDCL…MSTS), 251-278 (VKKL…YVSG), 279-308 (IVEV…HLGN), 309-337 (VETL…LTGK), 338-361 (VKRV…HLKS), 362-388 (LEYL…AWPF), 389-414 (LQTL…TLKN), 415-437 (LNNL…WPGK), 438-457 (MKQL…CLPQ), 458-478 (TLEI…ILPQ), 479-500 (LKEL…FLPV), and 501-524 (LSVM…SFQQ). Asn114 is a glycosylation site (N-linked (GlcNAc...) asparagine). N-linked (GlcNAc...) asparagine glycosylation is present at Asn199. The cysteines at positions 353 and 382 are disulfide-linked. Cys432 and Cys454 are oxidised to a cystine. Residue Asn442 is glycosylated (N-linked (GlcNAc...) asparagine). Positions 525–579 (LKTLEAGGNNFICSCDFLSFTQGQQALGRVLVDWPDDYRCDSPSHVRGQRLQDAR) constitute an LRRCT domain. Residues 588-608 (AAVVSAACCALFLFLLLTGVL) form a helical membrane-spanning segment. The Cytoplasmic segment spans residues 609-784 (CHRFHGLWYM…WLNLRAAIRS (176 aa)). The TIR domain maps to 639 to 782 (ICYDAFVSYS…GFWLNLRAAI (144 aa)). Lys754 is covalently cross-linked (Glycyl lysine isopeptide (Lys-Gly) (interchain with G-Cter in ubiquitin)). An ATG16L1-binding motif motif is present at residues 761–778 (YLEWPLDETQQEGFWLNL).

This sequence belongs to the Toll-like receptor family. As to quaternary structure, interacts with LY96, TLR1 and TLR6 (via extracellular domain). TLR2 seems to exist in heterodimers with either TLR1 or TLR6 before stimulation by the ligand. The heterodimers form bigger oligomers in response to their corresponding ligands as well as further heterotypic associations with other receptors such as CD14 and/or CD36. Binds MYD88 (via TIR domain). Interacts with TICAM1. Interacts with CNPY3. Interacts with ATG16L1. Interacts with PPP1R11. Interacts with TICAM2. Interacts with TIRAP. Post-translationally, ubiquitinated at Lys-754 by PPP1R11, leading to its degradation. Deubiquitinated by USP2. Glycosylation of Asn-442 is critical for secretion of the N-terminal ectodomain of TLR2.

The protein localises to the membrane. The protein resides in the cytoplasmic vesicle. Its subcellular location is the phagosome membrane. It is found in the membrane raft. Functionally, cooperates with LY96 to mediate the innate immune response to bacterial lipoproteins and other microbial cell wall components. Cooperates with TLR1 or TLR6 to mediate the innate immune response to bacterial lipoproteins or lipopeptides. Acts via MYD88 and TRAF6, leading to NF-kappa-B activation, cytokine secretion and the inflammatory response. May also promote apoptosis in response to lipoproteins. Forms activation clusters composed of several receptors depending on the ligand, these clusters trigger signaling from the cell surface and subsequently are targeted to the Golgi in a lipid-raft dependent pathway. Forms the cluster TLR2:TLR6:CD14:CD36 in response to diacylated lipopeptides and TLR2:TLR1:CD14 in response to triacylated lipopeptides. This Boselaphus tragocamelus (Nilgai) protein is Toll-like receptor 2 (TLR2).